Consider the following 481-residue polypeptide: Adenosylhomocysteinase (481 aa).

3 residues coordinate substrate: Thr-65, Asp-140, and Glu-200. 201-203 (TTT) is a binding site for NAD(+). Substrate-binding residues include Lys-230 and Asp-234. Residues Asn-235, 264 to 269 (GYGDVG), Glu-287, Asn-322, 343 to 345 (IGH), and Asn-393 each bind NAD(+).

This sequence belongs to the adenosylhomocysteinase family. It depends on NAD(+) as a cofactor.

The protein resides in the cytoplasm. It catalyses the reaction S-adenosyl-L-homocysteine + H2O = L-homocysteine + adenosine. The protein operates within amino-acid biosynthesis; L-homocysteine biosynthesis; L-homocysteine from S-adenosyl-L-homocysteine: step 1/1. In terms of biological role, may play a key role in the regulation of the intracellular concentration of adenosylhomocysteine. The protein is Adenosylhomocysteinase of Polynucleobacter asymbioticus (strain DSM 18221 / CIP 109841 / QLW-P1DMWA-1) (Polynucleobacter necessarius subsp. asymbioticus).